Here is a 225-residue protein sequence, read N- to C-terminus: Heptaprenylglyceryl phosphate synthase (225 aa).

K6 provides a ligand contact to sn-glycerol 1-phosphate. Mg(2+)-binding residues include D8 and T34. Sn-glycerol 1-phosphate contacts are provided by residues 153 to 158, G183, and 203 to 204; these read YVEYSG and GN.

The protein belongs to the GGGP/HepGP synthase family. Group I subfamily. In terms of assembly, homodimer. Mg(2+) serves as cofactor.

The catalysed reaction is sn-glycerol 1-phosphate + all-trans-heptaprenyl diphosphate = 3-heptaprenyl-sn-glycero-1-phosphate + diphosphate. Its pathway is membrane lipid metabolism; glycerophospholipid metabolism. Its function is as follows. Prenyltransferase that catalyzes in vivo the transfer of the heptaprenyl moiety of heptaprenyl pyrophosphate (HepPP; 35 carbon atoms) to the C3 hydroxyl of sn-glycerol-1-phosphate (G1P), producing heptaprenylglyceryl phosphate (HepGP). This reaction is an ether-bond-formation step in the biosynthesis of archaea-type G1P-based membrane lipids found in Bacillales. The sequence is that of Heptaprenylglyceryl phosphate synthase from Listeria monocytogenes serotype 4a (strain HCC23).